A 168-amino-acid polypeptide reads, in one-letter code: MPNWCSNRMYFSGEPAQIAEIKRLASGAVTPLYRRATNEGIQLFLAGSAGLLQTTEDVRFEPCPGLTAAGRGVVSPENIAFTRWLTHLQDGVLLDEQNCLMLHELWLQSGTGRRRWEELPDDARESITALFTPKRGDWCDIWSNEDVSVWWNRLCDNVLPEKPCRLTC.

This is an uncharacterized protein from Escherichia coli (strain K12).